A 590-amino-acid polypeptide reads, in one-letter code: Keratin, type II cytoskeletal 5 (590 aa).

Low complexity predominate over residues 1 to 18; sequence MSRQSSVSFRSGGSRSFS. Positions 1-20 are disordered; that stretch reads MSRQSSVSFRSGGSRSFSTA. The head stretch occupies residues 1–167; the sequence is MSRQSSVSFR…DPSIQRVRTE (167 aa). Phosphoserine is present on residues Ser5, Ser8, Ser16, and Ser21. Thr24 carries the post-translational modification Phosphothreonine; by CDK1. Residues Ser26, Ser36, Ser50, Ser64, Ser71, Ser75, and Ser82 each carry the phosphoserine modification. The residue at position 151 (Thr151) is a Phosphothreonine; by CDK1. A coil 1A region spans residues 168-203; sequence EREQIKTLNNKFASFIDKVRFLEQQNKVLDTKWTLL. In terms of domain architecture, IF rod spans 168-481; it reads EREQIKTLNN…KLLEGEECRL (314 aa). The linker 1 stretch occupies residues 204–222; that stretch reads QEQGTKTVRQNLEPLFEQY. Residues 223-315 are coil 1B; the sequence is INNLRRQLDS…FFDAELSQMQ (93 aa). The linker 12 stretch occupies residues 316–338; it reads THVSDTSVVLSMDNNRNLDLDSI. Positions 339–477 are coil 2; it reads IAEVKAQYEE…ATYRKLLEGE (139 aa). Positions 478-590 are tail; the sequence is ECRLSGEGVG…TSSSRKSFKS (113 aa). The disordered stretch occupies residues 566–590; the sequence is GSGGGSSSSVKFVSTTSSSRKSFKS. Positions 572–590 are enriched in low complexity; that stretch reads SSSVKFVSTTSSSRKSFKS.

This sequence belongs to the intermediate filament family. Heterodimer of a type I and a type II keratin. Heterodimer with type I keratin KRT25 leading to the formation of keratin intermediate filament (KIF) network. Forms a heterodimer (via 2B domains) with KRT14 (via 2B domains). Interacts with PLEC isoform 1C, when in a heterodimer with KRT14. Interacts with TCHP. Interacts with EPPK1. Interacts with AMELX. Interacts with PKP1 (via N-terminus) and PKP2. In terms of processing, phosphorylated by CDK1, AURKB and Rho-kinase, phosphorylation is regulated by the cell cycle. Thr-24 phosphorylation, mediated by CDK1, peaks during prometaphase or metaphase cells with phosphorylated filamentous structures evident throughout the cytoplasm during early mitosis. CDK1 phosphorylates Thr-24 in mitotic cells at the site of injury. O-glycosylated. Expressed in corneal epithelium (at protein level). Expressed in keratinocytes (at protein level).

Its subcellular location is the cytoplasm. Functionally, required for the formation of keratin intermediate filaments in the basal epidermis and maintenance of the skin barrier in response to mechanical stress. Regulates the recruitment of Langerhans cells to the epidermis, potentially by modulation of the abundance of macrophage chemotactic cytokines, macrophage inflammatory cytokines and CTNND1 localization in keratinocytes. The polypeptide is Keratin, type II cytoskeletal 5 (KRT5) (Homo sapiens (Human)).